We begin with the raw amino-acid sequence, 478 residues long: Ubiquitin carboxyl-terminal hydrolase calypso (478 aa).

Residues 11-239 (GWLELESDPG…IRFNLMAVVP (229 aa)) form the UCH catalytic domain. C97 acts as the Nucleophile in catalysis. H176 (proton donor) is an active-site residue. In terms of domain architecture, ULD spans 400–428 (NYDEFICTFLSMLAHQGELGDLVSQHLIT). A positively charged C-terminal tail required for binding nucleosomes region spans residues 430–478 (RKPNMGSVQNSGSRGVVRNYNKKTTTNGSSPKTPSSKRRRGRTKYRKRK). The span at 432–442 (PNMGSVQNSGS) shows a compositional bias: polar residues. A disordered region spans residues 432–478 (PNMGSVQNSGSRGVVRNYNKKTTTNGSSPKTPSSKRRRGRTKYRKRK). A compositionally biased stretch (basic residues) spans 464–478 (SSKRRRGRTKYRKRK).

The protein belongs to the peptidase C12 family. BAP1 subfamily. As to quaternary structure, catalytic component of the polycomb repressive deubiquitinase (PR-DUB) complex, at least composed of caly/calypso, Asx and sba (MBD5/6 homolog). The PR-DUB complex associates with nucleosomes to mediate deubiquitination of histone H2AK118ub1 substrates; the association requires the positively charged C-terminal tail of caly, probably due to direct binding of DNA. Interacts (via ULD domain) with Asx (via DEUBAD domain); the interaction produces a stable heterodimer with a composite binding site for ubiquitin. Homodimerizes (via coiled-coil hinge-region between the UCH and ULD domains) to mediate assembly of 2 copies of the caly-Asx heterodimer into a bisymmetric tetramer; dimerization enhances PR-DUB association with nucleosomes.

It is found in the nucleus. It catalyses the reaction Thiol-dependent hydrolysis of ester, thioester, amide, peptide and isopeptide bonds formed by the C-terminal Gly of ubiquitin (a 76-residue protein attached to proteins as an intracellular targeting signal).. Functionally, catalytic component of the polycomb repressive deubiquitinase (PR-DUB) complex, a complex that specifically mediates deubiquitination of histone H2A monoubiquitinated at 'Lys-119' (H2AK118ub1). Mediates bisymmetric organization of the PR-DUB complex and is involved in association with nucleosomes to mediate deubiquitination. Does not deubiquitinate monoubiquitinated histone H2B. Required to maintain the transcriptionally repressive state of homeotic genes throughout development. The PR-DUB complex has weak or no activity toward 'Lys-48'- and 'Lys-63'-linked polyubiquitin chains. Polycomb group (PcG) protein. The sequence is that of Ubiquitin carboxyl-terminal hydrolase calypso from Aedes aegypti (Yellowfever mosquito).